The chain runs to 193 residues: dCTP deaminase (193 aa).

Residues 110–115 (RSSLAR), D128, 136–138 (VLE), Y171, K178, and Q182 each bind dCTP. The active-site Proton donor/acceptor is E138. The tract at residues 169–193 (RPYNRRQDAKYRDQQGAVASRIDKD) is disordered.

Belongs to the dCTP deaminase family. Homotrimer.

It carries out the reaction dCTP + H2O + H(+) = dUTP + NH4(+). The protein operates within pyrimidine metabolism; dUMP biosynthesis; dUMP from dCTP (dUTP route): step 1/2. Catalyzes the deamination of dCTP to dUTP. This is dCTP deaminase from Cronobacter sakazakii (strain ATCC BAA-894) (Enterobacter sakazakii).